Consider the following 513-residue polypeptide: GMP synthase [glutamine-hydrolyzing] (513 aa).

The Glutamine amidotransferase type-1 domain occupies 3–200 (SVLVLDFGSQ…LINIAGIRPD (198 aa)). The active-site Nucleophile is the Cys80. Active-site residues include His174 and Glu176. Residues 201–388 (WSSKSFIEHQ…LGIPEDILMR (188 aa)) enclose the GMPS ATP-PPase domain. 228 to 234 (SGGVDST) lines the ATP pocket.

Homodimer.

It catalyses the reaction XMP + L-glutamine + ATP + H2O = GMP + L-glutamate + AMP + diphosphate + 2 H(+). Its pathway is purine metabolism; GMP biosynthesis; GMP from XMP (L-Gln route): step 1/1. In terms of biological role, catalyzes the synthesis of GMP from XMP. The protein is GMP synthase [glutamine-hydrolyzing] of Chlorobium luteolum (strain DSM 273 / BCRC 81028 / 2530) (Pelodictyon luteolum).